A 644-amino-acid chain; its full sequence is MVTALSDVNNTDNYGAGQIQVLEGLEAARKRPGMYIGSTSERGLHHLVWEIVDNSIDEALAGYANQIEVVIEKDNWIKVTDNGRGIPVDIQEKMGRPAVEVILTVLHAGGKFGGGGYKVSGGLHGVGSSVVNALSQDLEVYVHRNETIYHQAYKKGVPQFDLKEVGTTDKTGTVIRFKADGEIFTETTVYNYETLQQRIRELAFLNKGIQITLRDERDEENVREDSYHYEGGIKSYVELLNENKEPIHDEPIYIHQSKDDIEVEIAIQYNSGYATNLLTYANNIHTYEGGTHEDGFKRALTRVLNSYGLSSKIMKEEKDRLSGEDTREGMTAIISIKHGDPQFEGQTKTKLGNSEVRQVVDKLFSEHFERFLYENPQVARTVVEKGIMAARARVAAKKAREVTRRKSALDVASLPGKLADCSSKSPEECEIFLVEGDSAGGSTKSGRDSRTQAILPLRGKILNVEKARLDRILNNNEIRQMITAFGTGIGGDFDLAKARYHKIVIMTDADVDGAHIRTLLLTFFYRFMRPLIEAGYVYIAQPPLYKLTQGKQKYYVYNDRELDKLKSELNPTPKWSIARYKGLGEMNADQLWETTMNPEHRALLQVKLEDAIEADQTFEMLMGDVVENRRQFIEDNAVYANLDF.

Residues 429 to 543 (CEIFLVEGDS…AGYVYIAQPP (115 aa)) enclose the Toprim domain. The Mg(2+) site is built by glutamate 435, aspartate 508, and aspartate 510.

It belongs to the type II topoisomerase GyrB family. Heterotetramer, composed of two GyrA and two GyrB chains. In the heterotetramer, GyrA contains the active site tyrosine that forms a transient covalent intermediate with DNA, while GyrB binds cofactors and catalyzes ATP hydrolysis. Requires Mg(2+) as cofactor. Mn(2+) serves as cofactor. Ca(2+) is required as a cofactor.

Its subcellular location is the cytoplasm. It catalyses the reaction ATP-dependent breakage, passage and rejoining of double-stranded DNA.. Its function is as follows. A type II topoisomerase that negatively supercoils closed circular double-stranded (ds) DNA in an ATP-dependent manner to modulate DNA topology and maintain chromosomes in an underwound state. Negative supercoiling favors strand separation, and DNA replication, transcription, recombination and repair, all of which involve strand separation. Also able to catalyze the interconversion of other topological isomers of dsDNA rings, including catenanes and knotted rings. Type II topoisomerases break and join 2 DNA strands simultaneously in an ATP-dependent manner. The polypeptide is DNA gyrase subunit B (Staphylococcus aureus (strain COL)).